The following is a 610-amino-acid chain: Dopamine beta-hydroxylase (610 aa).

The Cytoplasmic portion of the chain corresponds to 1-9 (MQVPSPSVR). The chain crosses the membrane as a helical; Signal-anchor for type II membrane protein span at residues 10 to 30 (EAASMYGTAVAVFLVILVAAL). Over 31 to 610 (QGSAPAESPF…TVLNISGGKG (580 aa)) the chain is Intragranular. The DOMON domain occupies 50–166 (GTLELSWNIS…GTVHLVYGFL (117 aa)). 6 disulfide bridges follow: cysteine 147–cysteine 589, cysteine 225–cysteine 276, cysteine 262–cysteine 288, cysteine 383–cysteine 496, cysteine 387–cysteine 558, and cysteine 459–cysteine 481. Asparagine 177 is a glycosylation site (N-linked (GlcNAc...) asparagine). The active site involves tyrosine 223. Residues histidine 255 and histidine 256 each coordinate Cu(2+). Cu(2+) contacts are provided by histidine 326, histidine 405, histidine 407, and methionine 480. Residue histidine 405 is part of the active site. The N-linked (GlcNAc...) asparagine glycan is linked to asparagine 559. The disordered stretch occupies residues 585–610 (PTPHCPASQAQSPAGPTVLNISGGKG).

Belongs to the copper type II ascorbate-dependent monooxygenase family. As to quaternary structure, homotetramer; composed of two disulfide-linked dimers. Cu(2+) serves as cofactor. Post-translationally, proteolytic cleavage after the membrane-anchor leads to the release of the soluble form. In terms of processing, N-glycosylated. In terms of tissue distribution, detected in chromaffin granules in the adrenal medulla (at protein level). Detected in adrenal medulla.

It is found in the cytoplasmic vesicle. The protein localises to the secretory vesicle lumen. The protein resides in the secretory vesicle. It localises to the chromaffin granule lumen. Its subcellular location is the secretory vesicle membrane. It is found in the chromaffin granule membrane. It carries out the reaction dopamine + 2 L-ascorbate + O2 = (R)-noradrenaline + 2 monodehydro-L-ascorbate radical + H2O. It participates in catecholamine biosynthesis; (R)-noradrenaline biosynthesis; (R)-noradrenaline from dopamine: step 1/1. Functionally, catalyzes the hydroxylation of dopamine to noradrenaline (also known as norepinephrine), and is thus vital for regulation of these neurotransmitters. This chain is Dopamine beta-hydroxylase (DBH), found in Bos taurus (Bovine).